The following is a 121-amino-acid chain: General odorant-binding protein 72 (121 aa).

Intrachain disulfides connect Cys45–Cys101 and Cys90–Cys110.

It belongs to the PBP/GOBP family.

The protein resides in the secreted. Functionally, present in the aqueous fluid surrounding olfactory sensory dendrites and are thought to aid in the capture and transport of hydrophobic odorants into and through this fluid. In Anopheles gambiae (African malaria mosquito), this protein is General odorant-binding protein 72 (Obp72).